The following is a 227-amino-acid chain: UPF0173 metal-dependent hydrolase Cmaq_1073 (227 aa).

Belongs to the UPF0173 family.

This Caldivirga maquilingensis (strain ATCC 700844 / DSM 13496 / JCM 10307 / IC-167) protein is UPF0173 metal-dependent hydrolase Cmaq_1073.